The primary structure comprises 1203 residues: MAGHDVQYGKHRTRRSFSRIKEVLDLPNLIEIQTDSFKAFLDHGLKEVFEDVLPISNFTDTMELEFVGYEIKEPKYTLEEARIHDASYSAPIFVTFRLINKETGEIKTQEVFFGDFPIMTEMGTFIINGGERIIVSQLVRSPGVYFNDKVDKNGKVGYGSTVIPNRGAWLELESDSKDITYTRIDRTRKIPFTTLVRALGFSGDDEIFDIFGDSELVRNTVEKDIHKNPMDSRTDEALKEIYERLRPGEPKTAESSRSLLVARFFDPRRYDLAAVGRYKINKKLNVKTRLLNQTIAEPLVDPETGEILVEAGTIMTRSVIESIESHLDGDLNKIVYIPNDAAVVTEPVVLQKFKVIAPTDPDRVVTIIGNANPDDKVRTVTPADILAEMSYFLNLAEGLGRVDDIDHLGNRRIRAVGELLANQVRLGLSRMERNVRERMSVQDNEVLTPQQIINIRPVTAAVKEFFGSSQLSQFMDQHNPLSELSHKRRLSALGPGGLTRDRAGYEVRDVHYTHYGRMCPIETPEGPNIGLINNLSSYGHLNKYGFVQTPYRKVDRETGVVTNEIVWLTADEEDEYTVAQANSRLNEDGTFAEKIVMGRHQGVNQEYPANIVDYMDVSPKQVVAVATACIPFLENDDSNRALMGANMQRQAVPLINPQAPYVGTGMEYQAAHDSGAAVIAQYDGKVTYADADKVEVRREDGSLDVYHIQKFRRSNSGTAYNQRTLVKVGDVVEKGDFIADGPSMENGEMALGQNPIVAYMTWEGYNFEDAVIMSERLVKDDVYTSVHLEEYESETRDTKLGPEEITREIPNVGEDALKDLDEMGIIRIGAEVKEGDILVGKVTPKGEKDLSAEERLLHAIFGDKSREVRDTSLRVPHGADGVVRDVKIFTRVNGDELQSGVNMLVRVYIAQKRKIKVGDKMAGRHGNKGVVSRIVPVEDMPYLPDGTPVDIMLNPLGVPSRMNIGQVMELHLGMAARTLGIHIATPVFDGASSEDLWSTVKEAGMDSDAKTILYDGRTGEPFDNRVSVGVMYMIKLHHMVDDKLHARSVGPYSTVTQQPLGGKAQFGGQRFGEMEVWALEAYGASNVLQEILTYKSDDINGRLKAYEAITKGKPIPKPGVPESFRVLVKELQSLGLDMRVLDEDDQEVELRDLDEGMDEDVIHVDDLEKAREKAAQEAKAAFEAEEAEKATKAEATEEAAEQE.

Positions 1174–1195 are enriched in basic and acidic residues; that stretch reads AAQEAKAAFEAEEAEKATKAEA. The disordered stretch occupies residues 1174 to 1203; sequence AAQEAKAAFEAEEAEKATKAEATEEAAEQE.

This sequence belongs to the RNA polymerase beta chain family. In terms of assembly, the RNAP catalytic core consists of 2 alpha, 1 beta, 1 beta' and 1 omega subunit. When a sigma factor is associated with the core the holoenzyme is formed, which can initiate transcription.

The catalysed reaction is RNA(n) + a ribonucleoside 5'-triphosphate = RNA(n+1) + diphosphate. In terms of biological role, DNA-dependent RNA polymerase catalyzes the transcription of DNA into RNA using the four ribonucleoside triphosphates as substrates. This is DNA-directed RNA polymerase subunit beta from Streptococcus pneumoniae (strain ATCC 700669 / Spain 23F-1).